A 343-amino-acid polypeptide reads, in one-letter code: Thymidine kinase (343 aa).

Residue 27-34 (GAYGIGKS) coordinates ATP. The active-site Proton acceptor is the glutamate 56. 2 residues coordinate substrate: tyrosine 74 and glutamine 98. Arginine 188 lines the ATP pocket. Arginine 194 provides a ligand contact to substrate.

Belongs to the herpesviridae thymidine kinase family. As to quaternary structure, homodimer.

The catalysed reaction is thymidine + ATP = dTMP + ADP + H(+). Its function is as follows. Catalyzes the transfer of the gamma-phospho group of ATP to thymidine to generate dTMP in the salvage pathway of pyrimidine synthesis. The dTMP serves as a substrate for DNA polymerase during viral DNA replication. Allows the virus to be reactivated and to grow in non-proliferative cells lacking a high concentration of phosphorylated nucleic acid precursors. This is Thymidine kinase from Felidae (cat family).